The chain runs to 347 residues: Ribosomal RNA large subunit methyltransferase M (347 aa).

S-adenosyl-L-methionine contacts are provided by residues serine 184, 217–220 (APGG), aspartate 236, aspartate 256, and aspartate 272. Catalysis depends on lysine 301, which acts as the Proton acceptor.

It belongs to the class I-like SAM-binding methyltransferase superfamily. RNA methyltransferase RlmE family. RlmM subfamily. In terms of assembly, monomer.

The protein localises to the cytoplasm. The catalysed reaction is cytidine(2498) in 23S rRNA + S-adenosyl-L-methionine = 2'-O-methylcytidine(2498) in 23S rRNA + S-adenosyl-L-homocysteine + H(+). In terms of biological role, catalyzes the 2'-O-methylation at nucleotide C2498 in 23S rRNA. In Xanthomonas oryzae pv. oryzae (strain PXO99A), this protein is Ribosomal RNA large subunit methyltransferase M.